We begin with the raw amino-acid sequence, 162 residues long: Ciliary microtubule inner protein 5 (162 aa).

The interval 1–44 (MGSHPTPGLQRTTSAGYRLPPTRPPASVSPAARGGPMASRGLAG) is disordered.

The protein localises to the cell projection. Its subcellular location is the cilium. The chain is Ciliary microtubule inner protein 5 from Homo sapiens (Human).